A 222-amino-acid polypeptide reads, in one-letter code: Charged multivesicular body protein 4a (222 aa).

Disordered stretches follow at residues 1 to 21 (MSGL…TPEE) and 177 to 222 (LLHV…EWVS). Positions 1-116 (MSGLGRLFGR…ELAAQGLKKA (116 aa)) are interaction with phosphoinosides. The interval 1 to 150 (MSGLGRLFGR…QISDAISRPV (150 aa)) is intramolecular interaction with C-terminus. 2 coiled-coil regions span residues 20-105 (EEAI…VLRT) and 155-180 (DVDE…LLHV). Residues 151–222 (GFGDDVDEDE…ELKQLAEWVS (72 aa)) are intramolecular interaction with N-terminus. Ser196 is subject to Phosphoserine.

It belongs to the SNF7 family. Probable core component of the endosomal sorting required for transport complex III (ESCRT-III). ESCRT-III components are thought to multimerize to form a flat lattice on the perimeter membrane of the endosome. Several assembly forms of ESCRT-III may exist that interact and act sequentially. Self-associates; overexpression leads to the assembly of filaments that curve and associate to create circular rings. Interacts with CHMP2A. Interacts with CHMP3; the interaction requires the release of CHMP4A autoinhibition. Interacts with CHMP4B. Interacts with CHMP4C. Interacts with CHMP6. Interacts with VPS4A. Interacts with PDCD6IP; the interaction is direct.

The protein resides in the cytoplasmic vesicle membrane. It is found in the late endosome membrane. Probable core component of the endosomal sorting required for transport complex III (ESCRT-III) which is involved in multivesicular bodies (MVBs) formation and sorting of endosomal cargo proteins into MVBs. MVBs contain intraluminal vesicles (ILVs) that are generated by invagination and scission from the limiting membrane of the endosome and mostly are delivered to lysosomes enabling degradation of membrane proteins, such as stimulated growth factor receptors, lysosomal enzymes and lipids. The MVB pathway appears to require the sequential function of ESCRT-O, -I,-II and -III complexes. ESCRT-III proteins mostly dissociate from the invaginating membrane before the ILV is released. The ESCRT machinery also functions in topologically equivalent membrane fission events, such as the terminal stages of cytokinesis and the budding of enveloped viruses (lentiviruses). ESCRT-III proteins are believed to mediate the necessary vesicle extrusion and/or membrane fission activities, possibly in conjunction with the AAA ATPase VPS4. When overexpressed, membrane-assembled circular arrays of CHMP4A filaments can promote or stabilize negative curvature and outward budding. CHMP4A/B/C are required for the exosomal release of SDCBP, CD63 and syndecan. This chain is Charged multivesicular body protein 4a (CHMP4A), found in Bos taurus (Bovine).